A 559-amino-acid chain; its full sequence is NXPE family member 3 (559 aa).

The first 30 residues, 1–30 (MWTNFFKLRLFCCLLAVLMVVVLVINVTQV), serve as a signal peptide directing secretion. N-linked (GlcNAc...) asparagine glycans are attached at residues N237, N292, and N346.

The protein belongs to the NXPE family.

Its subcellular location is the secreted. This chain is NXPE family member 3 (NXPE3), found in Homo sapiens (Human).